We begin with the raw amino-acid sequence, 151 residues long: MKVIFMQDVKGRGKLGQVKDVPNGYAQNYLIKQGLAKEANKGNLNTLKRVEANEKAEYEAQKAAAQEIKKQLEADETVVELKAKAGSDSRLFGSISSKKIIEGLDKQFGIKLDKHKLELREPIKVLGYTNVPVKLFKGVESKVRVHVTQEN.

Belongs to the bacterial ribosomal protein bL9 family.

Functionally, binds to the 23S rRNA. The sequence is that of Large ribosomal subunit protein bL9 from Lactobacillus delbrueckii subsp. bulgaricus (strain ATCC 11842 / DSM 20081 / BCRC 10696 / JCM 1002 / NBRC 13953 / NCIMB 11778 / NCTC 12712 / WDCM 00102 / Lb 14).